We begin with the raw amino-acid sequence, 427 residues long: Serine hydroxymethyltransferase (427 aa).

120 to 122 (GHI) contributes to the (6S)-5,6,7,8-tetrahydrofolate binding site. Lysine 226 is modified (N6-(pyridoxal phosphate)lysine). Position 243 (glutamate 243) interacts with (6S)-5,6,7,8-tetrahydrofolate.

This sequence belongs to the SHMT family. In terms of assembly, homodimer. The cofactor is pyridoxal 5'-phosphate.

It is found in the cytoplasm. The protein operates within amino-acid biosynthesis; glycine biosynthesis; glycine from L-serine: step 1/1. Functionally, catalyzes the reversible interconversion of serine and glycine with a modified folate serving as the one-carbon carrier. Also exhibits a pteridine-independent aldolase activity toward beta-hydroxyamino acids, producing glycine and aldehydes, via a retro-aldol mechanism. This is Serine hydroxymethyltransferase from Thermococcus gammatolerans (strain DSM 15229 / JCM 11827 / EJ3).